Reading from the N-terminus, the 207-residue chain is Probable RNA 2'-phosphotransferase (207 aa).

It belongs to the KptA/TPT1 family.

Its function is as follows. Removes the 2'-phosphate from RNA via an intermediate in which the phosphate is ADP-ribosylated by NAD followed by a presumed transesterification to release the RNA and generate ADP-ribose 1''-2''-cyclic phosphate (APPR&gt;P). May function as an ADP-ribosylase. In Methanosarcina mazei (strain ATCC BAA-159 / DSM 3647 / Goe1 / Go1 / JCM 11833 / OCM 88) (Methanosarcina frisia), this protein is Probable RNA 2'-phosphotransferase.